Reading from the N-terminus, the 159-residue chain is Ribonuclease H (159 aa).

The region spanning 8-150 (NLKEITMYTD…CDQLAVAAAK (143 aa)) is the RNase H type-1 domain. Residues D17, E55, D77, and D142 each coordinate Mg(2+).

The protein belongs to the RNase H family. Monomer. Mg(2+) is required as a cofactor.

Its subcellular location is the cytoplasm. It carries out the reaction Endonucleolytic cleavage to 5'-phosphomonoester.. Its function is as follows. Endonuclease that specifically degrades the RNA of RNA-DNA hybrids. This Desulforamulus reducens (strain ATCC BAA-1160 / DSM 100696 / MI-1) (Desulfotomaculum reducens) protein is Ribonuclease H.